The following is a 262-amino-acid chain: Acyl-[acyl-carrier-protein]--UDP-N-acetylglucosamine O-acyltransferase (262 aa).

Belongs to the transferase hexapeptide repeat family. LpxA subfamily. In terms of assembly, homotrimer.

Its subcellular location is the cytoplasm. It catalyses the reaction a (3R)-hydroxyacyl-[ACP] + UDP-N-acetyl-alpha-D-glucosamine = a UDP-3-O-[(3R)-3-hydroxyacyl]-N-acetyl-alpha-D-glucosamine + holo-[ACP]. It functions in the pathway glycolipid biosynthesis; lipid IV(A) biosynthesis; lipid IV(A) from (3R)-3-hydroxytetradecanoyl-[acyl-carrier-protein] and UDP-N-acetyl-alpha-D-glucosamine: step 1/6. Functionally, involved in the biosynthesis of lipid A, a phosphorylated glycolipid that anchors the lipopolysaccharide to the outer membrane of the cell. The polypeptide is Acyl-[acyl-carrier-protein]--UDP-N-acetylglucosamine O-acyltransferase (Shigella dysenteriae serotype 1 (strain Sd197)).